A 197-amino-acid polypeptide reads, in one-letter code: NADH-quinone oxidoreductase subunit I 2 (197 aa).

4Fe-4S ferredoxin-type domains are found at residues 42-71 (GVIG…IDSH) and 91-120 (DRFA…WSPE). 8 residues coordinate [4Fe-4S] cluster: C51, C54, C57, C61, C100, C103, C106, and C110. The interval 147-197 (APPALDPGAEEPKELAAARKAADKLAAQQQPDQPGPDHPGQPDESGQEGRT) is disordered. Over residues 156-169 (EEPKELAAARKAAD) the composition is skewed to basic and acidic residues.

It belongs to the complex I 23 kDa subunit family. In terms of assembly, NDH-1 is composed of 14 different subunits. Subunits NuoA, H, J, K, L, M, N constitute the membrane sector of the complex. It depends on [4Fe-4S] cluster as a cofactor.

The protein resides in the cell membrane. The enzyme catalyses a quinone + NADH + 5 H(+)(in) = a quinol + NAD(+) + 4 H(+)(out). Functionally, NDH-1 shuttles electrons from NADH, via FMN and iron-sulfur (Fe-S) centers, to quinones in the respiratory chain. The immediate electron acceptor for the enzyme in this species is believed to be ubiquinone. Couples the redox reaction to proton translocation (for every two electrons transferred, four hydrogen ions are translocated across the cytoplasmic membrane), and thus conserves the redox energy in a proton gradient. The protein is NADH-quinone oxidoreductase subunit I 2 of Streptomyces coelicolor (strain ATCC BAA-471 / A3(2) / M145).